Reading from the N-terminus, the 993-residue chain is NACHT, LRR and PYD domains-containing protein 14 (993 aa).

In terms of domain architecture, NACHT spans 81 to 403 (QTVVLQGAAG…FYLLRENLEE (323 aa)). 87–94 (GAAGIGKT) contacts ATP. 9 LRR repeats span residues 636–657 (DLKE…LKCK), 660–680 (KLRV…QKLS), 688–708 (SLVF…KSLC), 717–738 (SLER…VLSS), 745–765 (RLTH…KLLS), 774–795 (TLQS…HLST), 802–822 (SLVH…KLLC), 831–852 (NLQE…DLAS), and 859–879 (NLWS…NILC).

This sequence belongs to the NLRP family. Detected in adult ovary and testis. Detected in oocytes and in germ cell elements in seminiferous tubules in adult testis (at protein level).

Its subcellular location is the cytoplasm. Its function is as follows. May be involved in inflammation and spermatogenesis. The protein is NACHT, LRR and PYD domains-containing protein 14 (Nlrp14) of Mus musculus (Mouse).